A 2598-amino-acid chain; its full sequence is Partially reducing polyketide synthase men1 (2598 aa).

Positions 7-435 constitute a Ketosynthase family 3 (KS3) domain; it reads SQSIAIVGLS…GSNAHAILDD (429 aa). Residues Cys-181, His-316, and His-358 each act as for beta-ketoacyl synthase activity in the active site. Over residues 450–459 the composition is skewed to basic residues; sequence GKSHHHHHQH. Disordered regions lie at residues 450-490 and 537-557; these read GKSH…NGTT and AEKQQQQQQQQGGQGGADPEK. Low complexity predominate over residues 474 to 490; sequence VNGTSEVNGTSGVNGTT. The 305-residue stretch at 611 to 915 folds into the Malonyl-CoA:ACP transacylase (MAT) domain; it reads YVFTGQGAQW…RGPVTQILQS (305 aa). Residues 1008 to 1151 form an N-terminal hotdog fold region; that stretch reads LGLIGAPMPN…GSVAVEFGAL (144 aa). One can recognise a PKS/mFAS DH domain in the interval 1008–1325; it reads LGLIGAPMPN…CVEMPSASGM (318 aa). A dehydratase (DH) domain region spans residues 1009 to 1323; the sequence is GLIGAPMPNF…LVCVEMPSAS (315 aa). Positions 1169–1325 are C-terminal hotdog fold; the sequence is TISQEVDVFY…CVEMPSASGM (157 aa). The Enoyl reductase (ER) domain maps to 1886–2197; the sequence is GMLNTLCFEI…ARSRQDKIVI (312 aa). The Ketoreductase (KR) domain maps to 2222–2399; sequence TYLIAGGLGG…AATIDLGIVK (178 aa). The Carrier domain occupies 2510-2587; that stretch reads EAARLVSAAV…AFASDLAKKG (78 aa). Ser-2547 carries the post-translational modification O-(pantetheine 4'-phosphoryl)serine.

The cofactor is pantetheine 4'-phosphate.

It participates in secondary metabolite biosynthesis. Its function is as follows. Partially reducing polyketide synthase; part of the gene cluster that mediates the biosynthesis of menisporopsin A, a bioactive macrocyclic polylactone. The biosynthesis of menisporopsin A is performed by a reducing (man1) and a non-reducing (men2) polyketide synthase that catalyze the formation of each menisporopsin A subunits, while the esterification and cyclolactonization activities are probably peformed by the unusual thioesterase domain of men2. First, a reduced diketide intermediate, 3-hydroxybutyryl-S-ACP is produced by men1 and transferred to men2; this is followed by a second reduced diketide which is further elongated using 3 units of malonyl-coA to form a reduced pentaketide. The cyclization of this intermediate by the PT domain forms the second subunit, 2,4-dihydroxy-6-(2-hydroxy-n-propyl)benzoyl-S-ACP. The TE domain of men2 then esterifies the secondary hydroxyl group on the side chain of the second subunit with the acyl-TE of the first subunit to form the first ester intermediate. This process occurs iteratively to form a linear tetraester intermediate. The final subunit is formed by a similar process, except that an extra malonyl-CoA is required in an additional elongation step to form a reduced hexaketide intermediate, and the carbonyl group next to the secondary hydroxyl group is reduced by a trans-acting ketoreductase. Again, the PT domain catalyzes cyclization to form the largest subunit, 2,4-dihydroxy-6-(2,4-dihydroxy-n-pentyl) benzoyl-S-ACP. Then the linear pentaester intermediate is formed. In this step, if the intermediate transfer rate is slow, intra- molecular cyclization involving the secondary hydroxyl group of the pentaester intermediate may occur to form menisporopsin B. Alternatively, transfer of the pentaester intermediate to the TE domain would allow cyclolactonization to be catalyzed by the TE to form menisporopsin A. This is Partially reducing polyketide synthase men1 from Menisporopsis theobromae.